Here is a 243-residue protein sequence, read N- to C-terminus: Small ribosomal subunit protein uS5 (243 aa).

The segment covering 1–10 has biased composition (basic and acidic residues); it reads MSDNETKETQ. Positions 1–50 are disordered; that stretch reads MSDNETKETQVAEETQNTVATESNNEDRKGRRGQRGEGRRGERRNRREEN. The segment covering 12–23 has biased composition (polar residues); that stretch reads AEETQNTVATES. Positions 25–50 are enriched in basic and acidic residues; it reads NEDRKGRRGQRGEGRRGERRNRREEN. Residues 55-118 form the S5 DRBM domain; that stretch reads LLDRVVTINR…LDAKKHMFSV (64 aa).

It belongs to the universal ribosomal protein uS5 family. Part of the 30S ribosomal subunit. Contacts proteins S4 and S8.

Its function is as follows. With S4 and S12 plays an important role in translational accuracy. Located at the back of the 30S subunit body where it stabilizes the conformation of the head with respect to the body. This is Small ribosomal subunit protein uS5 from Bifidobacterium longum (strain DJO10A).